An 87-amino-acid chain; its full sequence is MSETKVVRTLTGVVVSDKMDKTVTVLVERKVKHPIYGKIIRRSKKFHAHDENNEFKAGDLVVISESRPLSKTKSWVVTGLVEKSRQV.

The protein belongs to the universal ribosomal protein uS17 family. Part of the 30S ribosomal subunit.

Functionally, one of the primary rRNA binding proteins, it binds specifically to the 5'-end of 16S ribosomal RNA. The polypeptide is Small ribosomal subunit protein uS17 (Chromobacterium violaceum (strain ATCC 12472 / DSM 30191 / JCM 1249 / CCUG 213 / NBRC 12614 / NCIMB 9131 / NCTC 9757 / MK)).